Reading from the N-terminus, the 394-residue chain is Protein TsgA homolog (394 aa).

12 helical membrane passes run 11–31, 51–71, 76–96, 101–121, 134–154, 162–182, 206–226, 246–266, 274–294, 302–322, 334–354, and 363–383; these read WISY…GIVM, FLNA…EIIP, LVFG…GHNL, ISMF…TFLV, LLFT…AAAM, WYWV…LTLC, VGVL…LGFI, QLVS…SFIL, IVTV…STDN, ILAL…LGSL, FILT…GPIV, and LETA…LGFF.

The protein belongs to the major facilitator superfamily. TsgA family.

The protein localises to the cell inner membrane. This Yersinia pestis bv. Antiqua (strain Antiqua) protein is Protein TsgA homolog.